The following is a 325-amino-acid chain: Hydroxymethylglutaryl-CoA lyase, mitochondrial (325 aa).

A mitochondrion-targeting transit peptide spans 1–27 (MAAMRKALPRRLVGLASLRAVSTSSMG). Residues 33–300 (VKIVEVGPRD…HTGVNLQKLL (268 aa)) form the Pyruvate carboxyltransferase domain. A substrate-binding site is contributed by Arg41. Residue Asp42 participates in a divalent metal cation binding. At Lys48 the chain carries N6-acetyllysine; alternate. Lys48 is subject to N6-succinyllysine; alternate. Position 111 is an N6-acetyllysine (Lys111). An N6-acetyllysine; alternate mark is found at Lys137 and Lys179. Residues Lys137 and Lys179 each carry the N6-succinyllysine; alternate modification. 2 residues coordinate a divalent metal cation: His233 and His235. Residue Cys266 is part of the active site. An a divalent metal cation-binding site is contributed by Asn275. Positions 323–325 (CKL) match the Microbody targeting signal motif. Lys324 bears the N6-acetyllysine mark.

The protein belongs to the HMG-CoA lyase family. Homodimer; disulfide-linked. Can also form homotetramers. Requires a divalent metal cation as cofactor. Highest expression in liver. Expressed in pancreas, kidney, intestine, testis, fibroblasts and lymphoblasts. Very low expression in brain and skeletal muscle. The relative expression of isoform 2 (at mRNA level) is highest in heart (30%), skeletal muscle (22%), and brain (14%).

Its subcellular location is the mitochondrion matrix. The protein localises to the peroxisome. It carries out the reaction (3S)-3-hydroxy-3-methylglutaryl-CoA = acetoacetate + acetyl-CoA. Its pathway is metabolic intermediate metabolism; (S)-3-hydroxy-3-methylglutaryl-CoA degradation; acetoacetate from (S)-3-hydroxy-3-methylglutaryl-CoA: step 1/1. Its activity is regulated as follows. Stimulated by reducing agents such as dithiothreitol (DTT). In terms of biological role, mitochondrial 3-hydroxy-3-methylglutaryl-CoA lyase that catalyzes a cation-dependent cleavage of (S)-3-hydroxy-3-methylglutaryl-CoA into acetyl-CoA and acetoacetate, a key step in ketogenesis. Terminal step in leucine catabolism. Ketone bodies (beta-hydroxybutyrate, acetoacetate and acetone) are essential as an alternative source of energy to glucose, as lipid precursors and as regulators of metabolism. This is Hydroxymethylglutaryl-CoA lyase, mitochondrial (HMGCL) from Homo sapiens (Human).